The chain runs to 319 residues: HTH-type transcriptional regulator YidZ (319 aa).

One can recognise an HTH lysR-type domain in the interval 8 to 65; sequence LDLNLLLCLQLLMQERSVTKAAKRMNVTPSAVSKSLAKLRAWFDDPLFVNSPLGLSPT. The H-T-H motif DNA-binding region spans 25 to 44; that stretch reads VTKAAKRMNVTPSAVSKSLA.

Belongs to the LysR transcriptional regulatory family.

Functionally, involved in anaerobic NO protection. This Escherichia coli O17:K52:H18 (strain UMN026 / ExPEC) protein is HTH-type transcriptional regulator YidZ.